The following is a 58-amino-acid chain: MAQPKRRWSKQRTHKHRANWKLEIPNLTECPQCHEMKLPHRVCPNCGYYRNRKVVNQD.

Belongs to the bacterial ribosomal protein bL32 family.

In Caldicellulosiruptor bescii (strain ATCC BAA-1888 / DSM 6725 / KCTC 15123 / Z-1320) (Anaerocellum thermophilum), this protein is Large ribosomal subunit protein bL32.